Reading from the N-terminus, the 631-residue chain is Cyclic nucleotide-gated channel alpha-3 (631 aa).

Polar residues predominate over residues 1-18 (MAKVNTQCSQPSPTQLSI). Disordered regions lie at residues 1-21 (MAKV…IKNA) and 71-98 (EVST…RKEE). Residues 1–111 (MAKVNTQCSQ…VDPSSNIYYR (111 aa)) lie on the Cytoplasmic side of the membrane. The span at 87 to 98 (KPPDGGEGRKEE) shows a compositional bias: basic and acidic residues. Residues 112–133 (WLTAIALPVFYNWCLLVCRACF) traverse the membrane as a helical segment. Over 134-139 (DELQSE) the chain is Extracellular. The helical transmembrane segment at 140 to 160 (HLTLWLVLDYSADVLYVLDML) threads the bilayer. Topologically, residues 161-187 (VRARTGFLEQGLMVRDTKRLWKHYTKT) are cytoplasmic. The chain crosses the membrane as a helical span at residues 188 to 207 (LHFKLDILSLIPTDLAYLKL). Over 208–211 (GVNY) the chain is Extracellular. The helical transmembrane segment at 212–229 (PELRFNRLLKFSRLFEFF) threads the bilayer. The Cytoplasmic portion of the chain corresponds to 230–239 (DRTETRTNYP). The interval 239 to 347 (PNVFRIGNLV…GNVGSMISNM (109 aa)) is ion conduction pathway. The chain crosses the membrane as a helical span at residues 240-262 (NVFRIGNLVLYTLIIIHWNACIY). Residues 263–288 (FAISKFIGFGTDSWVYPNTSKPEYAR) are Extracellular-facing. Asn-280 carries N-linked (GalNAc...) asparagine glycosylation. Helical transmembrane passes span 289–319 (LSRK…DEEY) and 320–344 (LFVV…GSMI). The segment at 306–309 (TIGE) is selectivity filter. Residues 345–631 (SNMNAPRVEF…ENSEDASKTD (287 aa)) are Cytoplasmic-facing. Positions 349-426 (APRVEFQAKI…TLKKVRIFQD (78 aa)) are C-linker. The interval 429–549 (AGLLVELVLK…EEKGRQILMK (121 aa)) is cyclic nucleotide-binding domain. 3',5'-cyclic GMP is bound by residues Gly-489, Glu-490, Ser-492, Arg-505, Thr-506, and Asp-550. Residues 567–610 (VEEKVEYLESSLDILQTRFARLLAEYSASQMKLKQRLTRLESQM) adopt a coiled-coil conformation.

This sequence belongs to the cyclic nucleotide-gated cation channel (TC 1.A.1.5) family. CNGA3 subfamily. Forms heterotetrameric channels composed of CNGA3 and CNGB3 subunits with 3:1 stoichiometry. As to expression, prominently expressed in retina.

It is found in the cell membrane. It catalyses the reaction Ca(2+)(in) = Ca(2+)(out). It carries out the reaction Na(+)(in) = Na(+)(out). The enzyme catalyses K(+)(in) = K(+)(out). The catalysed reaction is NH4(+)(in) = NH4(+)(out). It catalyses the reaction Rb(+)(in) = Rb(+)(out). It carries out the reaction Li(+)(in) = Li(+)(out). The enzyme catalyses Cs(+)(in) = Cs(+)(out). In terms of biological role, pore-forming subunit of the cone cyclic nucleotide-gated channel. Mediates cone photoresponses at bright light converting transient changes in intracellular cGMP levels into electrical signals. In the dark, cGMP levels are high and keep the channel open enabling a steady inward current carried by Na(+) and Ca(2+) ions that leads to membrane depolarization and neurotransmitter release from synaptic terminals. Upon photon absorption cGMP levels decline leading to channel closure and membrane hyperpolarization that ultimately slows neurotransmitter release and signals the presence of light, the end point of the phototransduction cascade. Pore-forming subunit of the gustatory cyclic nucleotide-gated channel. In the taste buds, may sense oral extracellular pH and conduct ion currents that modulate the excitability of taste cells. Conducts cGMP- and cAMP-gated ion currents, with permeability for monovalent and divalent cations. This chain is Cyclic nucleotide-gated channel alpha-3, found in Mus musculus (Mouse).